Reading from the N-terminus, the 421-residue chain is Alpha-tubulin N-acetyltransferase 1 (421 aa).

Positions 1–190 (MEFPFDVDAL…NNFVIFEGFF (190 aa)) constitute an N-acetyltransferase domain. Lys56 carries the N6-acetyllysine; by autocatalysis modification. Acetyl-CoA is bound at residue 124-137 (FYIHESVQRHGHGR). At Lys146 the chain carries N6-acetyllysine; by autocatalysis. 160–169 (SQKLLKFLNK) lines the acetyl-CoA pocket. The interval 196–235 (PPAPSLRATRHSRAAAVDPTPAAPARKLPPKRAEGDIKPY) is disordered. Over residues 209–221 (AAAVDPTPAAPAR) the composition is skewed to low complexity. Basic and acidic residues predominate over residues 226 to 235 (KRAEGDIKPY). N6-acetyllysine; by autocatalysis occurs at positions 233 and 244. Residues 252-284 (PLNRAPRRATPPAHPPPRSSSLGNSPERGPLRP) form a disordered region. Phosphoserine occurs at positions 272 and 276. The residue at position 305 (Arg305) is an Asymmetric dimethylarginine. The disordered stretch occupies residues 306–402 (LLLAADPGGS…PAQSWTVGGD (97 aa)). Position 315 is a phosphoserine (Ser315). Arg323 carries the post-translational modification Omega-N-methylarginine. Residues 342–354 (VNSSSPNTGNQDS) show a composition bias toward polar residues. The segment covering 355–367 (KQGEQETKNRSAS) has biased composition (basic and acidic residues).

Belongs to the acetyltransferase ATAT1 family. In terms of assembly, component of the BBSome complex. Interacts with AP2 alpha-adaptins, including AP2A2, but not with AP1 gamma-adaptin (AP1G1/AP1G2); this interaction is required for efficient alpha-tubulin acetylation, hence clathrin-coated pits are sites of microtubule acetylation. Autoacetylation strongly increases tubulin acetylation.

The protein localises to the cytoplasm. It is found in the membrane. Its subcellular location is the clathrin-coated pit. It localises to the cell junction. The protein resides in the focal adhesion. The protein localises to the cell projection. It is found in the axon. Its subcellular location is the cytoskeleton. It localises to the spindle. The catalysed reaction is L-lysyl-[alpha-tubulin] + acetyl-CoA = N(6)-acetyl-L-lysyl-[alpha-tubulin] + CoA + H(+). Specifically acetylates 'Lys-40' in alpha-tubulin on the lumenal side of microtubules. Promotes microtubule destabilization and accelerates microtubule dynamics; this activity may be independent of acetylation activity. Acetylates alpha-tubulin with a slow enzymatic rate, due to a catalytic site that is not optimized for acetyl transfer. Enters the microtubule through each end and diffuses quickly throughout the lumen of microtubules. Acetylates only long/old microtubules because of its slow acetylation rate since it does not have time to act on dynamically unstable microtubules before the enzyme is released. Required for normal sperm flagellar function. Promotes directional cell locomotion and chemotaxis, through AP2A2-dependent acetylation of alpha-tubulin at clathrin-coated pits that are concentrated at the leading edge of migrating cells. May facilitate primary cilium assembly. The protein is Alpha-tubulin N-acetyltransferase 1 of Homo sapiens (Human).